A 349-amino-acid chain; its full sequence is 4-hydroxy-2-oxovalerate aldolase 2 (349 aa).

The 253-residue stretch at 12-264 (VRMTDTSLRD…KTGIDFFDIA (253 aa)) folds into the Pyruvate carboxyltransferase domain. Position 20–21 (20–21 (RD)) interacts with substrate. Position 21 (D21) interacts with Mn(2+). The active-site Proton acceptor is H24. 2 residues coordinate substrate: S174 and H203. H203 and H205 together coordinate Mn(2+). Position 294 (Y294) interacts with substrate.

It belongs to the 4-hydroxy-2-oxovalerate aldolase family.

The catalysed reaction is (S)-4-hydroxy-2-oxopentanoate = acetaldehyde + pyruvate. This is 4-hydroxy-2-oxovalerate aldolase 2 (bphI-2) from Mycolicibacterium smegmatis (strain ATCC 700084 / mc(2)155) (Mycobacterium smegmatis).